A 137-amino-acid polypeptide reads, in one-letter code: Nucleoside diphosphate kinase (137 aa).

Lys10, Phe59, Arg87, Thr93, Arg104, and Asn114 together coordinate ATP. His117 (pros-phosphohistidine intermediate) is an active-site residue.

The protein belongs to the NDK family. As to quaternary structure, homotetramer. The cofactor is Mg(2+).

It is found in the cytoplasm. The enzyme catalyses a 2'-deoxyribonucleoside 5'-diphosphate + ATP = a 2'-deoxyribonucleoside 5'-triphosphate + ADP. The catalysed reaction is a ribonucleoside 5'-diphosphate + ATP = a ribonucleoside 5'-triphosphate + ADP. Major role in the synthesis of nucleoside triphosphates other than ATP. The ATP gamma phosphate is transferred to the NDP beta phosphate via a ping-pong mechanism, using a phosphorylated active-site intermediate. The chain is Nucleoside diphosphate kinase from Streptomyces griseus subsp. griseus (strain JCM 4626 / CBS 651.72 / NBRC 13350 / KCC S-0626 / ISP 5235).